Here is a 243-residue protein sequence, read N- to C-terminus: MNASQDTIYAQVSEHISDFQFDSRVAGVFSDMIRRSVPGYTQIINTIGDFADRFVKPNTQVYDLGCSLGAATLSIRRQIQGRDCRIVAVDNSESMVIRCQENLNAYVSDTEVELICGDIRDIHIENASLVVLNFTLQFLPPEDRDALIAKIYQGLNPGGLLVLSEKIRFDDAPIQSVLEELHLDFKRANGYSELEISQKRSALENVMKPDTLSTHQQRLTHQGFSHFSTWFQCFNFASMVAIK.

Residues Tyr-40, 65-67 (GCS), 90-91 (DN), 118-119 (DI), Asn-133, and Arg-200 contribute to the S-adenosyl-L-methionine site.

The protein belongs to the class I-like SAM-binding methyltransferase superfamily. Cx-SAM synthase family. In terms of assembly, homodimer.

It carries out the reaction prephenate + S-adenosyl-L-methionine = carboxy-S-adenosyl-L-methionine + 3-phenylpyruvate + H2O. Catalyzes the conversion of S-adenosyl-L-methionine (SAM) to carboxy-S-adenosyl-L-methionine (Cx-SAM). The chain is Carboxy-S-adenosyl-L-methionine synthase from Shewanella oneidensis (strain ATCC 700550 / JCM 31522 / CIP 106686 / LMG 19005 / NCIMB 14063 / MR-1).